A 364-amino-acid polypeptide reads, in one-letter code: sn-glycerol-3-phosphate import ATP-binding protein UgpC (364 aa).

The ABC transporter domain maps to 4-235 (VVLRNVRKTY…PATTFVASFI (232 aa)). 37–44 (GPSGCGKS) lines the ATP pocket.

Belongs to the ABC transporter superfamily. sn-glycerol-3-phosphate importer (TC 3.A.1.1.3) family. In terms of assembly, the complex is composed of two ATP-binding proteins (UgpC), two transmembrane proteins (UgpA and UgpE) and a solute-binding protein (UgpB).

It is found in the cell inner membrane. The enzyme catalyses sn-glycerol 3-phosphate(out) + ATP + H2O = sn-glycerol 3-phosphate(in) + ADP + phosphate + H(+). Its function is as follows. Part of the ABC transporter complex UgpBAEC involved in sn-glycerol-3-phosphate (G3P) import. Responsible for energy coupling to the transport system. In Rhodopseudomonas palustris (strain HaA2), this protein is sn-glycerol-3-phosphate import ATP-binding protein UgpC.